Consider the following 247-residue polypeptide: MSKLFWAMLSFITRLPVPRRWSQGLDFEHYSRGIITFPLIGLLLGAISGLVFMVLQAWCGVPLAALFSVLVLALMTGGFHLDGLADTCDGVFSARSRDRMLEIMRDSRLGTHGGLALIFVVLAKILVLSELTLRGEPILASLAAACAVSRGTAALLMYRHRYAREEGLGNVFIGKIDGRQTCVTLGLAAIFAAVLLPGMHGVAAMVVTMVAIFILGQLLKRTLGGQTGDTLGAAIELGELVFLLALL.

The next 5 membrane-spanning stretches (helical) occupy residues 34 to 54, 59 to 79, 113 to 133, 138 to 158, and 194 to 214; these read IITF…VFMV, CGVP…TGGF, GGLA…ELTL, ILAS…LLMY, and VLLP…AIFI.

The protein belongs to the CobS family. The cofactor is Mg(2+).

It is found in the cell inner membrane. The enzyme catalyses alpha-ribazole + adenosylcob(III)inamide-GDP = adenosylcob(III)alamin + GMP + H(+). It carries out the reaction alpha-ribazole 5'-phosphate + adenosylcob(III)inamide-GDP = adenosylcob(III)alamin 5'-phosphate + GMP + H(+). It participates in cofactor biosynthesis; adenosylcobalamin biosynthesis; adenosylcobalamin from cob(II)yrinate a,c-diamide: step 7/7. In terms of biological role, joins adenosylcobinamide-GDP and alpha-ribazole to generate adenosylcobalamin (Ado-cobalamin). Also synthesizes adenosylcobalamin 5'-phosphate from adenosylcobinamide-GDP and alpha-ribazole 5'-phosphate. The sequence is that of Adenosylcobinamide-GDP ribazoletransferase from Escherichia coli O127:H6 (strain E2348/69 / EPEC).